The sequence spans 212 residues: N-(5'-phosphoribosyl)anthranilate isomerase (212 aa).

This sequence belongs to the TrpF family.

The enzyme catalyses N-(5-phospho-beta-D-ribosyl)anthranilate = 1-(2-carboxyphenylamino)-1-deoxy-D-ribulose 5-phosphate. It functions in the pathway amino-acid biosynthesis; L-tryptophan biosynthesis; L-tryptophan from chorismate: step 3/5. This chain is N-(5'-phosphoribosyl)anthranilate isomerase, found in Cereibacter sphaeroides (strain ATCC 17029 / ATH 2.4.9) (Rhodobacter sphaeroides).